The chain runs to 314 residues: MKKGINRVVLVGTGAVGCSYAYSMINQGVAEEFVLVDVNEAKAEGEAMDLSHAVPFSPSPTKVWSGSYADCKDADLVVITAGLPQKPGETRLDLVEKNTKIFKQIVRGIMDSGFDGIFLIATNPVDILTYVTWKESGLPKERVIGSGTTLDSARFRYMLGDYLDVDPRNVHAYIVGEHGDTELPVWSHATIGVQKLETILANNEQYKQEDLDKIFENVRDAAYQVIERKGATYYGIGMSLLRVTKAILNNENSVLTVSAYLEGQYGEKDAYVGVPAVINREGVREIVELELNEDEKAKFAHSVKVLKETMAPVL.

NAD(+) contacts are provided by residues Val-16, Asp-37, Lys-42, Tyr-68, and 82-83; that span reads GL. Residues Gln-85, Arg-91, and 123 to 126 contribute to the substrate site; that span reads NPVD. Residues 121 to 123 and Ser-146 each bind NAD(+); that span reads ATN. 151-154 is a binding site for substrate; that stretch reads DSAR. Arg-156 and His-171 together coordinate beta-D-fructose 1,6-bisphosphate. Residue His-178 is the Proton acceptor of the active site. Tyr-223 is subject to Phosphotyrosine. Thr-232 contacts substrate.

It belongs to the LDH/MDH superfamily. LDH family. Homotetramer.

It localises to the cytoplasm. It catalyses the reaction (S)-lactate + NAD(+) = pyruvate + NADH + H(+). It participates in fermentation; pyruvate fermentation to lactate; (S)-lactate from pyruvate: step 1/1. Allosterically activated by fructose 1,6-bisphosphate (FBP). Catalyzes the conversion of lactate to pyruvate. The polypeptide is L-lactate dehydrogenase 2 (Bacillus cereus (strain ATCC 14579 / DSM 31 / CCUG 7414 / JCM 2152 / NBRC 15305 / NCIMB 9373 / NCTC 2599 / NRRL B-3711)).